Here is a 317-residue protein sequence, read N- to C-terminus: Lipase 1 (317 aa).

Residues M1–G18 form the signal peptide. C19 carries the N-palmitoyl cysteine lipid modification. C19 carries S-diacylglycerol cysteine lipidation. The 228-residue stretch at P69–V296 folds into the AB hydrolase-1 domain. H74 is a catalytic residue. The active-site Nucleophile is S142. Active-site charge relay system residues include E270 and H292.

Its subcellular location is the cell outer membrane. The catalysed reaction is a triacylglycerol + H2O = a diacylglycerol + a fatty acid + H(+). The protein is Lipase 1 (lip1) of Psychrobacter immobilis.